The following is a 261-amino-acid chain: uncharacterized protein (261 aa).

Residues isoleucine 33, aspartate 78, and asparagine 105 each coordinate NADP(+). The active-site Proton donor is the serine 157. Positions 172, 176, and 206 each coordinate NADP(+). The active-site Proton acceptor is the tyrosine 172. Catalysis depends on lysine 176, which acts as the Lowers pKa of active site Tyr.

This sequence belongs to the short-chain dehydrogenases/reductases (SDR) family.

The protein resides in the cytoplasm. Its subcellular location is the nucleus. This is an uncharacterized protein from Schizosaccharomyces pombe (strain 972 / ATCC 24843) (Fission yeast).